A 448-amino-acid polypeptide reads, in one-letter code: Binary larvicide subunit BinB (448 aa).

Residues 1–198 (MCDSKDNSGV…TAFVNSSFYA (198 aa)) are beta-trefoil domain. Cysteines 67 and 161 form a disulfide. Residues 199 to 448 (AAIPQLPQTS…NEELIPKINQ (250 aa)) are probable pore-forming domain.

The protein belongs to the toxin_10 family. As to quaternary structure, forms a heterodimer with BinA. Post-translationally, processed by proteases extracted from mosquito larval gut.

The protein localises to the spore. Its subcellular location is the perispore. Its function is as follows. Component of a binary toxin active against Culex and some Aedes mosquito larvae; mortality towards both C.quinquefasciatus and A.atropalpus is maximal by 48 hours. A.aegypti is not very susceptible to this toxin. This subunit is responsible for localized binding to specific regions of the host larval gut. Binary toxin internalization into host gut cells requires both proteins. The protein is Binary larvicide subunit BinB (binB) of Lysinibacillus sphaericus (Bacillus sphaericus).